The primary structure comprises 274 residues: NAD kinase (274 aa).

Asp61 functions as the Proton acceptor in the catalytic mechanism. NAD(+) contacts are provided by residues 61-62 (DG), Lys66, 134-135 (ND), Lys145, Asp164, and 175-180 (TAYSLS).

Belongs to the NAD kinase family. A divalent metal cation serves as cofactor.

The protein localises to the cytoplasm. It carries out the reaction NAD(+) + ATP = ADP + NADP(+) + H(+). Involved in the regulation of the intracellular balance of NAD and NADP, and is a key enzyme in the biosynthesis of NADP. Catalyzes specifically the phosphorylation on 2'-hydroxyl of the adenosine moiety of NAD to yield NADP. This chain is NAD kinase, found in Clostridium tetani (strain Massachusetts / E88).